The sequence spans 259 residues: Probable dihydroorotate dehydrogenase B (NAD(+)), electron transfer subunit (259 aa).

Residues 1 to 89 (MLPLNVTITQ…RGPFGKGFTL (89 aa)) enclose the FAD-binding FR-type domain. [2Fe-2S] cluster-binding residues include cysteine 211, cysteine 216, cysteine 219, and cysteine 229.

It belongs to the PyrK family. Heterotetramer of 2 PyrK and 2 PyrD type B subunits. It depends on [2Fe-2S] cluster as a cofactor. The cofactor is FAD.

Its pathway is pyrimidine metabolism; UMP biosynthesis via de novo pathway; orotate from (S)-dihydroorotate (NAD(+) route): step 1/1. In terms of biological role, responsible for channeling the electrons from the oxidation of dihydroorotate from the FMN redox center in the PyrD type B subunit to the ultimate electron acceptor NAD(+). The sequence is that of Probable dihydroorotate dehydrogenase B (NAD(+)), electron transfer subunit from Methanosarcina acetivorans (strain ATCC 35395 / DSM 2834 / JCM 12185 / C2A).